The sequence spans 446 residues: Tubulin beta-6 chain (446 aa).

An MREI motif motif is present at residues 1-4; that stretch reads MREI. GTP contacts are provided by Gln11, Glu69, Ser138, Gly142, Thr143, and Gly144. Residue Glu69 participates in Mg(2+) binding. Ser172 is modified (phosphoserine; by CDK1). The GTP site is built by Asn204 and Asn226. A 5-glutamyl polyglutamate modification is found at Glu438.

It belongs to the tubulin family. Dimer of alpha and beta chains. A typical microtubule is a hollow water-filled tube with an outer diameter of 25 nm and an inner diameter of 15 nM. Alpha-beta heterodimers associate head-to-tail to form protofilaments running lengthwise along the microtubule wall with the beta-tubulin subunit facing the microtubule plus end conferring a structural polarity. Microtubules usually have 13 protofilaments but different protofilament numbers can be found in some organisms and specialized cells. The cofactor is Mg(2+). Some glutamate residues at the C-terminus are polyglutamylated, resulting in polyglutamate chains on the gamma-carboxyl group. Polyglutamylation plays a key role in microtubule severing by spastin (SPAST). SPAST preferentially recognizes and acts on microtubules decorated with short polyglutamate tails: severing activity by SPAST increases as the number of glutamates per tubulin rises from one to eight, but decreases beyond this glutamylation threshold. Glutamylation is also involved in cilia motility. Post-translationally, some glutamate residues at the C-terminus are monoglycylated but not polyglycylated due to the absence of functional TTLL10 in human. Monoglycylation is mainly limited to tubulin incorporated into cilia and flagella axonemes, which is required for their stability and maintenance. Flagella glycylation controls sperm motility. Both polyglutamylation and monoglycylation can coexist on the same protein on adjacent residues, and lowering glycylation levels increases polyglutamylation, and reciprocally. In terms of processing, phosphorylated on Ser-172 by CDK1 during the cell cycle, from metaphase to telophase, but not in interphase. This phosphorylation inhibits tubulin incorporation into microtubules. In terms of tissue distribution, ubiquitous. Maximal expression in breast and lung, where it represents around 10% of all beta-tubulins. Largely decreased expression in most cancerous tissues.

The protein localises to the cytoplasm. Its subcellular location is the cytoskeleton. In terms of biological role, tubulin is the major constituent of microtubules, a cylinder consisting of laterally associated linear protofilaments composed of alpha- and beta-tubulin heterodimers. Microtubules grow by the addition of GTP-tubulin dimers to the microtubule end, where a stabilizing cap forms. Below the cap, tubulin dimers are in GDP-bound state, owing to GTPase activity of alpha-tubulin. This is Tubulin beta-6 chain (TUBB6) from Homo sapiens (Human).